A 141-amino-acid chain; its full sequence is Ribonuclease P protein component (141 aa).

2 disordered regions span residues 37-56 (RTEEESNAAKTGDNPRVGFT) and 114-141 (RRITAKGERRSGRKRRTERPEPGPVNGK). Positions 114–123 (RRITAKGERR) are enriched in basic and acidic residues.

Belongs to the RnpA family. In terms of assembly, consists of a catalytic RNA component (M1 or rnpB) and a protein subunit.

It carries out the reaction Endonucleolytic cleavage of RNA, removing 5'-extranucleotides from tRNA precursor.. Its function is as follows. RNaseP catalyzes the removal of the 5'-leader sequence from pre-tRNA to produce the mature 5'-terminus. It can also cleave other RNA substrates such as 4.5S RNA. The protein component plays an auxiliary but essential role in vivo by binding to the 5'-leader sequence and broadening the substrate specificity of the ribozyme. This is Ribonuclease P protein component from Brucella suis biovar 1 (strain 1330).